The chain runs to 372 residues: Chaperone protein DnaJ (372 aa).

Residues 5–70 (DYYELLEISR…EKKSIYDRYG (66 aa)) enclose the J domain. The CR-type zinc finger occupies 134-211 (GCNKEINYKY…CKGTGYEEVK (78 aa)). Zn(2+)-binding residues include Cys-147, Cys-150, Cys-163, Cys-166, Cys-185, Cys-188, Cys-199, and Cys-202. CXXCXGXG motif repeat units lie at residues 147–154 (CKPCEGTG), 163–170 (CPTCKGQG), 185–192 (CPRCGGTG), and 199–206 (CKSCKGTG).

Belongs to the DnaJ family. In terms of assembly, homodimer. Requires Zn(2+) as cofactor.

Its subcellular location is the cytoplasm. In terms of biological role, participates actively in the response to hyperosmotic and heat shock by preventing the aggregation of stress-denatured proteins and by disaggregating proteins, also in an autonomous, DnaK-independent fashion. Unfolded proteins bind initially to DnaJ; upon interaction with the DnaJ-bound protein, DnaK hydrolyzes its bound ATP, resulting in the formation of a stable complex. GrpE releases ADP from DnaK; ATP binding to DnaK triggers the release of the substrate protein, thus completing the reaction cycle. Several rounds of ATP-dependent interactions between DnaJ, DnaK and GrpE are required for fully efficient folding. Also involved, together with DnaK and GrpE, in the DNA replication of plasmids through activation of initiation proteins. The polypeptide is Chaperone protein DnaJ (Aliarcobacter butzleri (strain RM4018) (Arcobacter butzleri)).